A 1066-amino-acid polypeptide reads, in one-letter code: MIKEPEFRDYTPGKLEEKIEEFWKENNIYQKIKELRKNGPKYYFLDGPPYVSGAIHLGTAWNKIIKDMIIRFRTMQGYNVWRQPGFDMHGLPIEVKVEQALGLKTKKEIEEKIGVENFIKKCKEFALNNLKIMTEQFKMLGIWMDWDDPYMTIKNEYIESAWFTLKKAWEKGLLEKDKRVLHWCPRCETALAEHEVRGEYKLRKDPSIYVKFPIEGKENEYLLIWTTTPWTLPANLAVSAHPEYDYVKVKVEFNGKEEYWILAKALVDKVLGEIGVKGEVIEEFKGRELEGLRYIHVLMDEYPRQKEFREKYEWAHRIILADFVTLEEGTGLVHTAPGHGEEDFEVGKKYGLPIYSPVDDQGRYVEGKWKGIYVKEADPQIIEHLKEKGYLVKAGEIEHKYPHCWRCKTPLIFRATDQWFLKVSKVKDRIIKENDEKVTWYPDWVKIRFDNGVRDSGDWVISRQRYWGIPLPIWQSEDGEIYVVGSWRELVELAVAIEVNGERIDLPESYEEKLKVIEEKLGPEDLHRPYVDAFIIKVNGKEMRRVKDVVDVWFDSGIASWASLGYPRNKELFEKLWPADFIVEGEDQVTKWFYSQQAASVIAFDTVPYRRVAMHGYVLDEKGDKMSKSLGNIIRPEEVVEKAGRDTFRFYMLWATNPWENLKFSWKGVEQVRRMLNILWNVYVLSATYMSLDNFDPRNVKVEELAFREEDKWILSRVNSLIREVENGIETFYLTKATRALYNFVVEDLSRWYVRLIRKRLWVEGDDPDKLAAYYTLWKVFDVLLRLMAPFTPYITEEIYQNLMRPFIGIESVHMLDWPKVDESAVDEDLEKEMEFIRRIVEAGSAARQKARIKLRYPVRKIIIETQDETVKKAVERLNYILRDQLNAKEVVIGKVERELTVKPNFAKVGPEFKGDSRLVAKWINEHGLELYEKGEVDVEIEGKKFHLTREHIIVEEKLPDFLVAEDFEGGRVYVDKTLTRELLAEGLAREFVRRIQEMRKRLDLDVNDRIVVTIETTDDNRELLQENLDYIMRETRAIEVRFEEAKGYVVEWPEVQAKIGIEKVE.

Residues 49 to 59 (PYVSGAIHLGT) carry the 'HIGH' region motif. The 'KMSKS' region motif lies at 625 to 629 (KMSKS). Position 628 (K628) interacts with ATP.

Belongs to the class-I aminoacyl-tRNA synthetase family. IleS type 2 subfamily. In terms of assembly, monomer. Zn(2+) is required as a cofactor.

It localises to the cytoplasm. The catalysed reaction is tRNA(Ile) + L-isoleucine + ATP = L-isoleucyl-tRNA(Ile) + AMP + diphosphate. Its function is as follows. Catalyzes the attachment of isoleucine to tRNA(Ile). As IleRS can inadvertently accommodate and process structurally similar amino acids such as valine, to avoid such errors it has two additional distinct tRNA(Ile)-dependent editing activities. One activity is designated as 'pretransfer' editing and involves the hydrolysis of activated Val-AMP. The other activity is designated 'posttransfer' editing and involves deacylation of mischarged Val-tRNA(Ile). The protein is Isoleucine--tRNA ligase of Pyrococcus horikoshii (strain ATCC 700860 / DSM 12428 / JCM 9974 / NBRC 100139 / OT-3).